The chain runs to 481 residues: MSMTASLALTVPELILSVGALLLLLVAAFGGDGFARAIGWGAVALFAAAGFSLTGPAGNGGPGFDGLYIADSFAAFAKLLIYIAAAVSVAVAPGFFSRTGGGYRAEYPVLILLSGVGMGMMVSAGDLLTLYVGLELQSLSAYVLASFMRRDTRSAEAGLKYFVLGALASGILLYGISLLYGFTGTTLFAGISDSLAKGMGTGQMFGMVFVFAGLAFKISAVPFHMWTPDVYEGAPTPVTAFFASAPKVAGMALLLRVAIEAMGSGTDTWRQIVVFAALASTILGAVAAIGQTSMKRLLAYSSINNVGFALFGLAAGSADGVAATMTYMAVYVAMTLGSFICVLQMRGQDGQPVETIASLSGLSRSRPGLAAAFAIFMFSLAGIPPLFGFWPKFLVFDALVRAGFWPLAMVGIATSVIGAFYYLKIVKTIYFDDPAPAEFAPAASKLEGGLITLAALAVSPLGYLAIPLLDATSMAAARSLF.

Helical transmembrane passes span 14–34, 38–57, 76–96, 108–128, 162–182, 204–224, 235–255, 272–292, 297–317, 323–343, 369–389, 403–423, and 449–469; these read LILSVGALLLLLVAAFGGDGF, IGWGAVALFAAAGFSLTGPA, FAKLLIYIAAAVSVAVAPGFF, PVLILLSGVGMGMMVSAGDLL, FVLGALASGILLYGISLLYGF, MFGMVFVFAGLAFKISAVPFH, PTPVTAFFASAPKVAGMALLL, IVVFAALASTILGAVAAIGQT, LLAYSSINNVGFALFGLAAGS, ATMTYMAVYVAMTLGSFICVL, LAAAFAIFMFSLAGIPPLFGF, GFWPLAMVGIATSVIGAFYYL, and GLITLAALAVSPLGYLAIPLL.

Belongs to the complex I subunit 2 family. In terms of assembly, NDH-1 is composed of 14 different subunits. Subunits NuoA, H, J, K, L, M, N constitute the membrane sector of the complex.

The protein resides in the cell inner membrane. It carries out the reaction a quinone + NADH + 5 H(+)(in) = a quinol + NAD(+) + 4 H(+)(out). NDH-1 shuttles electrons from NADH, via FMN and iron-sulfur (Fe-S) centers, to quinones in the respiratory chain. The immediate electron acceptor for the enzyme in this species is believed to be ubiquinone. Couples the redox reaction to proton translocation (for every two electrons transferred, four hydrogen ions are translocated across the cytoplasmic membrane), and thus conserves the redox energy in a proton gradient. The protein is NADH-quinone oxidoreductase subunit N of Rhizorhabdus wittichii (strain DSM 6014 / CCUG 31198 / JCM 15750 / NBRC 105917 / EY 4224 / RW1) (Sphingomonas wittichii).